We begin with the raw amino-acid sequence, 712 residues long: tRNA 5-methylaminomethyl-2-thiouridine biosynthesis bifunctional protein MnmC (712 aa).

Residues 1 to 268 are tRNA (mnm(5)s(2)U34)-methyltransferase; that stretch reads MPNMRHRVNS…RRALRHAQSD (268 aa). The segment at 292–712 is FAD-dependent cmnm(5)s(2)U34 oxidoreductase; that stretch reads IGGGVASTHL…MRKLIKGKAL (421 aa).

In the N-terminal section; belongs to the methyltransferase superfamily. tRNA (mnm(5)s(2)U34)-methyltransferase family. This sequence in the C-terminal section; belongs to the DAO family. FAD serves as cofactor.

It is found in the cytoplasm. It carries out the reaction 5-aminomethyl-2-thiouridine(34) in tRNA + S-adenosyl-L-methionine = 5-methylaminomethyl-2-thiouridine(34) in tRNA + S-adenosyl-L-homocysteine + H(+). Catalyzes the last two steps in the biosynthesis of 5-methylaminomethyl-2-thiouridine (mnm(5)s(2)U) at the wobble position (U34) in tRNA. Catalyzes the FAD-dependent demodification of cmnm(5)s(2)U34 to nm(5)s(2)U34, followed by the transfer of a methyl group from S-adenosyl-L-methionine to nm(5)s(2)U34, to form mnm(5)s(2)U34. In Shewanella sediminis (strain HAW-EB3), this protein is tRNA 5-methylaminomethyl-2-thiouridine biosynthesis bifunctional protein MnmC.